We begin with the raw amino-acid sequence, 120 residues long: Seripauperin-24 (120 aa).

The signal sequence occupies residues 1–20; it reads MVKLTSIAAGVAAIAATASA.

Belongs to the SRP1/TIP1 family. Seripauperin subfamily. In terms of processing, O-glycosylated.

It localises to the secreted. It is found in the cell wall. In terms of biological role, component of the cell wall. The protein is Seripauperin-24 (PAU24) of Saccharomyces cerevisiae (strain ATCC 204508 / S288c) (Baker's yeast).